Here is a 1128-residue protein sequence, read N- to C-terminus: Major DNA-binding protein (1128 aa).

The segment at 1104-1128 is required for nuclear localization; the sequence is LGGGGQGSGGRRKRRLATVLPGLEV.

It belongs to the herpesviridae major DNA-binding protein family. As to quaternary structure, homooligomers. Forms double-helical filaments necessary for the formation of replication compartments within the host nucleus. Interacts with the origin-binding protein. Interacts with the helicase primase complex; this interaction stimulates primer synthesis activity of the helicase-primase complex. Interacts with the DNA polymerase. Interacts with the alkaline exonuclease; this interaction increases its nuclease processivity.

The protein resides in the virion tegument. It is found in the host nucleus. In terms of biological role, plays several crucial roles in viral infection. Participates in the opening of the viral DNA origin to initiate replication by interacting with the origin-binding protein. May disrupt loops, hairpins and other secondary structures present on ssDNA to reduce and eliminate pausing of viral DNA polymerase at specific sites during elongation. Promotes viral DNA recombination by performing strand-transfer, characterized by the ability to transfer a DNA strand from a linear duplex to a complementary single-stranded DNA circle. Can also catalyze the renaturation of complementary single strands. Additionally, reorganizes the host cell nucleus, leading to the formation of prereplicative sites and replication compartments. This process is driven by the protein which can form double-helical filaments in the absence of DNA. The chain is Major DNA-binding protein from Epstein-Barr virus (strain GD1) (HHV-4).